We begin with the raw amino-acid sequence, 250 residues long: Isoprenyl transferase (250 aa).

The active site involves aspartate 27. Aspartate 27 provides a ligand contact to Mg(2+). Substrate contacts are provided by residues 28-31 (GNRR), tryptophan 32, histidine 48, and 76-78 (STE). Asparagine 79 (proton acceptor) is an active-site residue. Residues phenylalanine 80, arginine 82, arginine 199, and 205 to 207 (RVS) each bind substrate. Glutamate 218 contacts Mg(2+).

This sequence belongs to the UPP synthase family. As to quaternary structure, homodimer. Mg(2+) is required as a cofactor.

Catalyzes the condensation of isopentenyl diphosphate (IPP) with allylic pyrophosphates generating different type of terpenoids. The polypeptide is Isoprenyl transferase (Chlamydia abortus (strain DSM 27085 / S26/3) (Chlamydophila abortus)).